The following is a 142-amino-acid chain: Large ribosomal subunit protein uL13 (142 aa).

This sequence belongs to the universal ribosomal protein uL13 family. Part of the 50S ribosomal subunit.

Functionally, this protein is one of the early assembly proteins of the 50S ribosomal subunit, although it is not seen to bind rRNA by itself. It is important during the early stages of 50S assembly. This Citrifermentans bemidjiense (strain ATCC BAA-1014 / DSM 16622 / JCM 12645 / Bem) (Geobacter bemidjiensis) protein is Large ribosomal subunit protein uL13.